Consider the following 43-residue polypeptide: MQDIKTYLSTAPVLATFWFGLLAGLLIEINRFFPDALTFSFAF.

A helical transmembrane segment spans residues 7 to 27; that stretch reads YLSTAPVLATFWFGLLAGLLI.

The protein belongs to the PsaJ family.

The protein localises to the plastid. The protein resides in the chloroplast thylakoid membrane. May help in the organization of the PsaE and PsaF subunits. The chain is Photosystem I reaction center subunit IX from Gnetum parvifolium (Small-leaved jointfir).